A 295-amino-acid chain; its full sequence is 33 kDa chaperonin (295 aa).

Intrachain disulfides connect Cys238–Cys240 and Cys271–Cys274.

The protein belongs to the HSP33 family. Under oxidizing conditions two disulfide bonds are formed involving the reactive cysteines. Under reducing conditions zinc is bound to the reactive cysteines and the protein is inactive.

It localises to the cytoplasm. In terms of biological role, redox regulated molecular chaperone. Protects both thermally unfolding and oxidatively damaged proteins from irreversible aggregation. Plays an important role in the bacterial defense system toward oxidative stress. The polypeptide is 33 kDa chaperonin (Clostridium botulinum (strain Alaska E43 / Type E3)).